Consider the following 336-residue polypeptide: Succinylglutamate desuccinylase (336 aa).

Zn(2+) contacts are provided by His59, Glu62, and His151. The active site involves Glu215.

The protein belongs to the AspA/AstE family. Succinylglutamate desuccinylase subfamily. Zn(2+) serves as cofactor.

It carries out the reaction N-succinyl-L-glutamate + H2O = L-glutamate + succinate. The protein operates within amino-acid degradation; L-arginine degradation via AST pathway; L-glutamate and succinate from L-arginine: step 5/5. Transforms N(2)-succinylglutamate into succinate and glutamate. This is Succinylglutamate desuccinylase from Pseudomonas fluorescens (strain Pf0-1).